Here is a 327-residue protein sequence, read N- to C-terminus: MAKPAKRVAVTGAAGQIAYSLLFRIANGDLLGKDQPVILQLLDLPQAQAAVKGVVMELDDCAFPLLAGVVITDDPKVAFKDADVALLVGARPRSKGMERKDLLSANAEIFTVQGAALNEVASRDVKVLVVGNPANTNAYIAMKSAPDLPKKNFTAMLRLDHNRALSQLAAKSGKPVASIEKLAVWGNHSPTMYPDFRFATAEGESLLKLINDDAWNRDTFIPTVGKRGAAIIEARGLSSAASAANAAIDHVRDWVLGTNGKWVTMGIPSDGSYGIPEDIIYGVPVTCENGEYKRVEGLEIDAFSREKMDGTLAELLEERDGVAHLLK.

An NAD(+)-binding site is contributed by 12–18 (GAAGQIA). Residues Arg93 and Arg99 each coordinate substrate. NAD(+)-binding positions include Asn106, Gln113, and 130–132 (VGN). The substrate site is built by Asn132 and Arg163. Residue His188 is the Proton acceptor of the active site.

It belongs to the LDH/MDH superfamily. MDH type 2 family.

The enzyme catalyses (S)-malate + NAD(+) = oxaloacetate + NADH + H(+). Functionally, catalyzes the reversible oxidation of malate to oxaloacetate. This Burkholderia thailandensis (strain ATCC 700388 / DSM 13276 / CCUG 48851 / CIP 106301 / E264) protein is Malate dehydrogenase 1.